A 248-amino-acid chain; its full sequence is Phosphomannomutase (248 aa).

Residue Asp-12 is the Nucleophile of the active site. Positions 12 and 14 each coordinate Mg(2+). The active-site Proton donor/acceptor is Asp-14. Arg-21, Arg-123, Arg-134, Arg-141, Ser-179, and Asp-181 together coordinate alpha-D-mannose 1-phosphate. 3 residues coordinate Mg(2+): Asp-207, Phe-219, and Thr-224.

Belongs to the eukaryotic PMM family. Homodimer. Mg(2+) serves as cofactor.

It is found in the cytoplasm. It catalyses the reaction alpha-D-mannose 1-phosphate = D-mannose 6-phosphate. The protein operates within nucleotide-sugar biosynthesis; GDP-alpha-D-mannose biosynthesis; alpha-D-mannose 1-phosphate from D-fructose 6-phosphate: step 2/2. Functionally, catalyzes the interconversion of mannose-6-phosphate to mannose-1-phosphate, the precursor for the synthesis of GDP-mannose. GDP-mannose is an essential sugar nucleotide for the synthesis of D-mannose-containing cell wall polysaccharides (galactomannans and glucomannans), glycolipids, glycoproteins and the antioxidant L-ascorbate. This Spinacia oleracea (Spinach) protein is Phosphomannomutase.